A 269-amino-acid polypeptide reads, in one-letter code: Putative aga operon transcriptional repressor (269 aa).

In terms of domain architecture, HTH deoR-type spans 15 to 70; sequence TSERREQIIQRLRQQGSVQVNDLSALYGVSTVTIRNDLAFLEKQGIAVRAYGGALI. Residues 32–51 constitute a DNA-binding region (H-T-H motif); it reads VQVNDLSALYGVSTVTIRND.

Probable repressor for the aga operon for N-acetyl galactosamine transport and metabolism. In Escherichia coli O157:H7, this protein is Putative aga operon transcriptional repressor (agaR).